Here is a 774-residue protein sequence, read N- to C-terminus: Multiple C2 domain and transmembrane region protein 11 (774 aa).

The span at 1 to 12 (MAVNGTGNGTGD) shows a compositional bias: gly residues. The segment at 1–30 (MAVNGTGNGTGDGDFSLKETSPNIGNGGVN) is disordered. C2 domains lie at 9–145 (GTGD…PQWY), 184–307 (VTGE…SLWY), and 338–471 (LDES…THSY). 4 residues coordinate Ca(2+): Asp-62, Asn-110, Asp-112, and Asp-118. Transmembrane regions (helical) follow at residues 608 to 628 (LFVV…CFVF) and 722 to 742 (FVSC…FLAF).

This sequence belongs to the MCTP family. The cofactor is Ca(2+). In terms of tissue distribution, observed in flowers.

It is found in the endoplasmic reticulum membrane. Functionally, may function as a signaling molecule by regulating the trafficking of other regulators. The protein is Multiple C2 domain and transmembrane region protein 11 of Arabidopsis thaliana (Mouse-ear cress).